We begin with the raw amino-acid sequence, 153 residues long: Ribosome maturation factor RimP (153 aa).

The protein belongs to the RimP family.

It localises to the cytoplasm. Required for maturation of 30S ribosomal subunits. This Coxiella burnetii (strain RSA 331 / Henzerling II) protein is Ribosome maturation factor RimP.